The chain runs to 196 residues: Mitochondrial intermembrane space cysteine motif-containing protein MIX23 (196 aa).

The Cx14C motif motif lies at 99–114; it reads CEKEAAEMKNETDQQC. Residues 178 to 192 carry the Cx13C motif motif; it reads CEQNNDYLKEFTQFC.

It belongs to the MIX23 family.

The protein resides in the mitochondrion intermembrane space. In terms of biological role, regulator of the mitochondrial protein import machinery that is localized in the mitochondrial intermembrane space (IMS) and facilitates the transport of proteins from the cytosol into the mitochondrial matrix. Not essential for mitochondrial protein import but induced and required when mitochondrial import is compromised. Stimulates or stabilizes the translocation into the mitochondria of proteins such as OXA1, ATP1 and COX12. This is Mitochondrial intermembrane space cysteine motif-containing protein MIX23 from Saccharomyces cerevisiae (strain ATCC 204508 / S288c) (Baker's yeast).